A 471-amino-acid polypeptide reads, in one-letter code: Secretogranin-3 (471 aa).

Residues 1-22 (MGFLWTGSWILVLVLNSGPIQA) form the signal peptide. Disordered stretches follow at residues 24 to 73 (PKPE…SNFS), 92 to 145 (KAKQ…HQLD), 208 to 231 (ANNYEEAPEKPTSRTENQDGKIPE), and 345 to 405 (KLEK…DEAK). Over residues 28-45 (GSQDKSLHNRELSAERPL) the composition is skewed to basic and acidic residues. Serine 40 bears the Phosphoserine mark. The O-linked (Xyl...) (chondroitin sulfate) serine glycan is linked to serine 40. The span at 62 to 73 (PSESKPSESNFS) shows a compositional bias: low complexity. Basic and acidic residues-rich tracts occupy residues 106–142 (LNVDDADSTKNRKLTDEYDSTKSGLDRKVQDDPDGLH), 214–231 (APEKPTSRTENQDGKIPE), 345–355 (KLEKNTTDSKS), and 363–405 (EKSH…DEAK). The residue at position 365 (serine 365) is a Phosphoserine.

As to quaternary structure, interacts with CHGA. Interacts with secretogranin II/SCG2. Interacts (via C-terminus) with CPE. In terms of tissue distribution, expression restricted to the brain and pituitary gland. Not detected in the adrenal gland.

The protein resides in the cytoplasmic vesicle. It is found in the secretory vesicle. It localises to the secretory vesicle membrane. The protein localises to the secreted. Its function is as follows. Member of the granin protein family that regulates the biogenesis of secretory granules. Acts as a sorting receptor for intragranular proteins including chromogranin A/CHGA. May also play a role in angiogenesis. Promotes endothelial proliferation, migration and tube formation through MEK/ERK signaling pathway. The polypeptide is Secretogranin-3 (Scg3) (Rattus norvegicus (Rat)).